A 631-amino-acid polypeptide reads, in one-letter code: Nucleoside triphosphatase I (631 aa).

Residues 42–204 (FLGLDTMHSI…TMIVNLLRPK (163 aa)) form the Helicase ATP-binding domain. 55–62 (HDTGVGKT) is a binding site for ATP. Residues 141–144 (DECH) carry the DEXH box motif. A Helicase C-terminal domain is found at 367-536 (KFTEVCLKIL…LFKVFKESSI (170 aa)). Residues 457–524 (DIFILDMTWN…NIIKTKSKEF (68 aa)) form a binding to the cap-specific mRNA (nucleoside-2'-O-)-methyltransferase region.

This sequence belongs to the helicase family. NPH I subfamily. Monomer. Interacts (via C-terminus) with RAP94 (via N-terminus). Interacts with the cap-specific mRNA (nucleoside-2'-O-)-methyltransferase.

Its subcellular location is the virion. It carries out the reaction a ribonucleoside 5'-triphosphate + H2O = a ribonucleoside 5'-diphosphate + phosphate + H(+). Functionally, DNA-dependent ATPase required for providing the needed energy to achieve the termination of early transcripts. Acts in concert with the RAP94 subunit of the virion RNA polymerase and the capping enzyme/VTF to catalyze release of UUUUUNU-containing nascent RNA from the elongation complex. NPH-I must bind ssDNA in order to exhibit ATPase activity. The protein is Nucleoside triphosphatase I (NPH1) of Erythrocebus patas (Red guenon).